The chain runs to 369 residues: UDP-N-acetyl-3-dehydro-alpha-D-glucosamine 3-aminotranferase (369 aa).

At Lys-190 the chain carries N6-(pyridoxal phosphate)lysine.

The protein belongs to the DegT/DnrJ/EryC1 family. The cofactor is pyridoxal 5'-phosphate.

The catalysed reaction is UDP-2-acetamido-3-amino-2,3-dideoxy-alpha-D-glucopyranose + 2-oxoglutarate = UDP-2-acetamido-3-dehydro-2-deoxy-alpha-D-glucopyranose + L-glutamate. It participates in bacterial outer membrane biogenesis; LPS lipid A biosynthesis. Its function is as follows. Aminotranferase involved in the synthesis of 2,3-diamino-2,3-dideoxy-D-glucopyranose (GlcN3N), which is a component of lipid A in some species. Catalyzes the amination of UDP-2-acetamido-3-dehydro-2-deoxy-alpha-D-glucopyranose (UDP-3-oxo-GlcNAc) to UDP-2-acetamido-3-amino-2,3-dideoxy-alpha-D-glucopyranose (UDP-GlcNAc3N), using L-glutamate as the amine donor. Other amine donors, such as alanine and glutamine, can substitute for glutamate, but product formation is slower. This is UDP-N-acetyl-3-dehydro-alpha-D-glucosamine 3-aminotranferase from Acidithiobacillus ferrooxidans (strain ATCC 23270 / DSM 14882 / CIP 104768 / NCIMB 8455) (Ferrobacillus ferrooxidans (strain ATCC 23270)).